A 366-amino-acid polypeptide reads, in one-letter code: ATP-dependent 6-phosphofructokinase 2 (366 aa).

Residues glycine 15, 78-79 (KD), and 119-122 (GDGT) each bind ATP. Position 120 (aspartate 120) interacts with Mg(2+). Residues 142 to 144 (TID), arginine 179, 186 to 188 (MGR), glutamate 239, arginine 284, and 290 to 293 (HIQR) contribute to the substrate site. Aspartate 144 acts as the Proton acceptor in catalysis.

This sequence belongs to the phosphofructokinase type A (PFKA) family. Mixed-substrate PFK group III subfamily. As to quaternary structure, homodimer or homotetramer. Mg(2+) is required as a cofactor.

Its subcellular location is the cytoplasm. The catalysed reaction is beta-D-fructose 6-phosphate + ATP = beta-D-fructose 1,6-bisphosphate + ADP + H(+). It functions in the pathway carbohydrate degradation; glycolysis; D-glyceraldehyde 3-phosphate and glycerone phosphate from D-glucose: step 3/4. With respect to regulation, subject to allosteric activation by ADP and other diphosphonucleosides, and inhibition by phosphoenolpyruvate. Functionally, catalyzes the phosphorylation of D-fructose 6-phosphate to fructose 1,6-bisphosphate by ATP, the first committing step of glycolysis. This is ATP-dependent 6-phosphofructokinase 2 from Clostridium perfringens (strain 13 / Type A).